Here is a 419-residue protein sequence, read N- to C-terminus: Protein farnesyltransferase subunit beta (419 aa).

PFTB repeat units lie at residues 68-109, 119-160, 167-208, 215-256, and 329-371; these read EDNT…ITLG, RNKL…SVLN, IKNV…ILIG, LPRL…ALLQ, and SIAL…SLCQ. (2E,6E)-farnesyl diphosphate is bound by residues 193 to 196 and 235 to 238; these read HGGY and RTNK. Residues Asp-241 and Cys-243 each coordinate Zn(2+). (2E,6E)-farnesyl diphosphate is bound at residue 244-247; it reads YSFW. His-359 contributes to the Zn(2+) binding site.

This sequence belongs to the protein prenyltransferase subunit beta family. As to quaternary structure, heterodimer of FTA and FTB. It depends on Zn(2+) as a cofactor.

The catalysed reaction is L-cysteinyl-[protein] + (2E,6E)-farnesyl diphosphate = S-(2E,6E)-farnesyl-L-cysteinyl-[protein] + diphosphate. In terms of biological role, catalyzes the transfer of a farnesyl moiety from farnesyl diphosphate to a cysteine at the fourth position from the C-terminus of several proteins. The beta subunit FTB is responsible for peptide-binding. The sequence is that of Protein farnesyltransferase subunit beta (FTB) from Pisum sativum (Garden pea).